A 513-amino-acid chain; its full sequence is ATP synthase subunit alpha 1 (513 aa).

169-176 (GDRQTGKT) provides a ligand contact to ATP.

Belongs to the ATPase alpha/beta chains family. F-type ATPases have 2 components, CF(1) - the catalytic core - and CF(0) - the membrane proton channel. CF(1) has five subunits: alpha(3), beta(3), gamma(1), delta(1), epsilon(1). CF(0) has three main subunits: a(1), b(2) and c(9-12). The alpha and beta chains form an alternating ring which encloses part of the gamma chain. CF(1) is attached to CF(0) by a central stalk formed by the gamma and epsilon chains, while a peripheral stalk is formed by the delta and b chains.

Its subcellular location is the cell inner membrane. The enzyme catalyses ATP + H2O + 4 H(+)(in) = ADP + phosphate + 5 H(+)(out). Produces ATP from ADP in the presence of a proton gradient across the membrane. The alpha chain is a regulatory subunit. The sequence is that of ATP synthase subunit alpha 1 from Nitrosospira multiformis (strain ATCC 25196 / NCIMB 11849 / C 71).